Here is an 89-residue protein sequence, read N- to C-terminus: Small ribosomal subunit protein uS14 (89 aa).

Belongs to the universal ribosomal protein uS14 family. In terms of assembly, part of the 30S ribosomal subunit. Contacts proteins S3 and S10.

Functionally, binds 16S rRNA, required for the assembly of 30S particles and may also be responsible for determining the conformation of the 16S rRNA at the A site. In Parabacteroides distasonis (strain ATCC 8503 / DSM 20701 / CIP 104284 / JCM 5825 / NCTC 11152), this protein is Small ribosomal subunit protein uS14.